Here is a 750-residue protein sequence, read N- to C-terminus: Photosystem I P700 chlorophyll a apoprotein A1 (750 aa).

Helical transmembrane passes span 70–93 (VFSA…FHGA), 156–179 (LYCT…FHYH), 195–219 (LNHH…HVSL), 291–309 (IAHH…GHMY), 346–369 (WHAQ…HHMY), 385–411 (LSLF…IFMV), 433–455 (AIIS…LYIH), and 531–549 (FLVH…LILL). Residues C573 and C582 each coordinate [4Fe-4S] cluster. Transmembrane regions (helical) follow at residues 589-610 (HVFL…HFSW) and 664-686 (LSAY…MFLF). H675 contacts chlorophyll a'. 2 residues coordinate chlorophyll a: M683 and Y691. W692 serves as a coordination point for phylloquinone. A helical membrane pass occupies residues 724–744 (AVGVTHYLLGGIATTWAFFLA).

It belongs to the PsaA/PsaB family. As to quaternary structure, the PsaA/B heterodimer binds the P700 chlorophyll special pair and subsequent electron acceptors. PSI consists of a core antenna complex that captures photons, and an electron transfer chain that converts photonic excitation into a charge separation. The eukaryotic PSI reaction center is composed of at least 11 subunits. The cofactor is P700 is a chlorophyll a/chlorophyll a' dimer, A0 is one or more chlorophyll a, A1 is one or both phylloquinones and FX is a shared 4Fe-4S iron-sulfur center..

It localises to the plastid. The protein localises to the chloroplast thylakoid membrane. It catalyses the reaction reduced [plastocyanin] + hnu + oxidized [2Fe-2S]-[ferredoxin] = oxidized [plastocyanin] + reduced [2Fe-2S]-[ferredoxin]. In terms of biological role, psaA and PsaB bind P700, the primary electron donor of photosystem I (PSI), as well as the electron acceptors A0, A1 and FX. PSI is a plastocyanin-ferredoxin oxidoreductase, converting photonic excitation into a charge separation, which transfers an electron from the donor P700 chlorophyll pair to the spectroscopically characterized acceptors A0, A1, FX, FA and FB in turn. Oxidized P700 is reduced on the lumenal side of the thylakoid membrane by plastocyanin. The chain is Photosystem I P700 chlorophyll a apoprotein A1 from Aethionema cordifolium (Lebanon stonecress).